The chain runs to 404 residues: Caspase b (404 aa).

A propeptide spanning residues 1–171 (MEDITQLLSD…DIYTPRSGTQ (171 aa)) is cleaved from the precursor. Residues 8–80 (LSDVLEDLVE…LRKIKQNERA (73 aa)) form the Pyrin domain. Residues histidine 249 and cysteine 296 contribute to the active site. Positions 301–316 (SSGVLAQDSVFASDSW) are excised as a propeptide.

The protein belongs to the peptidase C14A family. In terms of assembly, upon direct LPS-binding, forms large homooligomers, resulting in its activation. These oligomers are often referred to as 'non-canonical inflammasomes'. Heterotetramer that consists of two anti-parallel arranged heterodimers, each one formed by a 20 kDa (p20) and a 10 kDa (p10) subunit. Interacts with caspa. Interacts with pycard; the interaction only occurs in the presence of nlrp1. Component of NLRP1 inflammasomes. Inflammasomes are supramolecular complexes that assemble in the cytosol in response to pathogens and other damage-associated signals and play critical roles in innate immunity and inflammation. The NLRP1 inflammasome is composed of the signal sensor nlrp1, and the adapter pycard (asc), which recruit effector pro-inflammatory caspases caspa and/or caspb. The interaction between nlrp1 and pycard is required for the sequential recruitment of caspa and then caspb. Caspa is preferentially recruited first and this causes the cleavage of pro-il1b into the midformed il1b. This is followed by the recruitment of caspb, which is activated and cleaves the midformed il1b resulting in il1b maturation. In terms of processing, the two subunits are derived from the precursor sequence by an autocatalytic mechanism. In terms of tissue distribution, expressed in the spleen, kidney and liver, and highly expressed in the gills and gut.

The protein resides in the inflammasome. It localises to the cytoplasm. It carries out the reaction Strict requirement for Asp at the P1 position. It has a preferred cleavage sequence of Tyr-Val-Ala-Asp-|- but also cleaves at Asp-Glu-Val-Asp-|-.. Its activity is regulated as follows. Activated by homooligomerization induced by direct binding to cytosolic LPS. In terms of biological role, thiol protease which cleaves IL-1 beta (il1b), releasing the mature cytokine which is involved in a variety of inflammatory processes, and mediates apoptosis. Component of the NLRP1 inflammasome, which plays a crucial role in innate immunity and inflammation. In response to pathogens and other damage-associated signals, recruited to the NLRP1 inflammasome in its precursor form following the recruitment of caspase caspa. Its subsequent activation causes the cleavage of the midformed pro-il1b and results in il1b maturation and secretion in the extracellular milieu. Activated by direct binding to bacterial lipopolysaccharides (LPS), which causes non-canonical inflammasome activation and results in the pyroptosis of infected cells and their extrusion into the gut lumen, as well as in cytokine secretion. Plays a crucial role in the restriction of bacterial infection to intestinal sites. Pyroptosis limits bacterial replication, while cytokine secretion promotes the recruitment and activation of immune cells and triggers mucosal inflammation. Promotes pyroptosis by bacterial infection by E.piscicida. This chain is Caspase b, found in Danio rerio (Zebrafish).